A 235-amino-acid chain; its full sequence is Chaperone protein TorD (235 aa).

It belongs to the TorD/DmsD family. TorD subfamily.

The protein localises to the cytoplasm. Its function is as follows. Involved in the biogenesis of TorA. Acts on TorA before the insertion of the molybdenum cofactor and, as a result, probably favors a conformation of the apoenzyme that is competent for acquiring the cofactor. The sequence is that of Chaperone protein TorD from Shewanella amazonensis (strain ATCC BAA-1098 / SB2B).